The primary structure comprises 514 residues: HTH-type transcriptional regulatory protein TyrR (514 aa).

The ACT domain occupies 2–72 (RLEVFCEDRL…GVTDVRTVPW (71 aa)). The PAS domain occupies 78–120 (EHLALSALLEALPEPVLSLDMKSKIEMANPASCQLFAHTQDRM). Residues 206–428 (IIAVSAKMKH…VKNAIYRALT (223 aa)) enclose the Sigma-54 factor interaction domain. ATP contacts are provided by residues 234–241 (GNTGTGKD) and 290–299 (ANGGSVLLDE). A DNA-binding region (H-T-H motif) is located at residues 482–502 (STRKLAKRLGVSHTAIANKLR).

As to quaternary structure, homodimer. In presence of tyrosine (or high concentrations of phenylalanine or tryptophan) and ATP, it self-associates to form an hexamer.

The protein resides in the cytoplasm. Its function is as follows. Dual transcriptional regulator of the TyrR regulon, which includes a number of genes coding for proteins involved in the biosynthesis or transport of the three aromatic amino acids, phenylalanine, tyrosine and tryptophan. These three aromatic amino acids act as effectors which bind to the TyrR protein to form an active regulatory protein. Acts by binding specifically to TyrR boxes in the promoter region of the target genes. This is HTH-type transcriptional regulatory protein TyrR from Citrobacter braakii.